Reading from the N-terminus, the 286-residue chain is Phosphoribosylaminoimidazole-succinocarboxamide synthase (286 aa).

Belongs to the SAICAR synthetase family.

It carries out the reaction 5-amino-1-(5-phospho-D-ribosyl)imidazole-4-carboxylate + L-aspartate + ATP = (2S)-2-[5-amino-1-(5-phospho-beta-D-ribosyl)imidazole-4-carboxamido]succinate + ADP + phosphate + 2 H(+). It functions in the pathway purine metabolism; IMP biosynthesis via de novo pathway; 5-amino-1-(5-phospho-D-ribosyl)imidazole-4-carboxamide from 5-amino-1-(5-phospho-D-ribosyl)imidazole-4-carboxylate: step 1/2. The polypeptide is Phosphoribosylaminoimidazole-succinocarboxamide synthase (Histophilus somni (strain 2336) (Haemophilus somnus)).